The sequence spans 384 residues: MAKHLFTSESVSEGHPDKIADQISDAVLDAILEQDPKARVACETYVKTGMVMVGGEVTTSAWVDIEEITRKTVRDIGYTHSDMGFDADSCAILNVIGKQSPDINQGVDRADPKEQGAGDQGLMFGYANNETDSLMPAPITYSHMLVKRQSEVRKDKTLPWLRPDAKSQVTFAYNPDGSIAGIDAVVLSTQHCDSVSQSDLIEGVMETIIKPVLPAKWLSKDTKYFINPTGRFVIGGPVGDCGLTGRKIIVDTYGGMARHGGGAFSGKDPSKVDRSAAYAARYVAKNIVAAGLADRCEIQVSYAIGVAEPTSISIETFGTAKVGEELLIDLVRRHFDLRPYGLTEMLNLARPIYQATAAYGHFGREEFPWEATDKVEVLRADAGI.

His-15 lines the ATP pocket. Asp-17 serves as a coordination point for Mg(2+). Glu-43 contacts K(+). L-methionine-binding residues include Glu-56 and Gln-99. The segment at 99–109 (QSPDINQGVDR) is flexible loop. Residues 164-166 (DAK), 231-232 (RF), Asp-240, 246-247 (RK), Ala-263, and Lys-267 contribute to the ATP site. L-methionine is bound at residue Asp-240. Lys-271 serves as a coordination point for L-methionine.

This sequence belongs to the AdoMet synthase family. As to quaternary structure, homotetramer; dimer of dimers. Requires Mg(2+) as cofactor. The cofactor is K(+).

It is found in the cytoplasm. It carries out the reaction L-methionine + ATP + H2O = S-adenosyl-L-methionine + phosphate + diphosphate. The protein operates within amino-acid biosynthesis; S-adenosyl-L-methionine biosynthesis; S-adenosyl-L-methionine from L-methionine: step 1/1. Catalyzes the formation of S-adenosylmethionine (AdoMet) from methionine and ATP. The overall synthetic reaction is composed of two sequential steps, AdoMet formation and the subsequent tripolyphosphate hydrolysis which occurs prior to release of AdoMet from the enzyme. The sequence is that of S-adenosylmethionine synthase from Shewanella halifaxensis (strain HAW-EB4).